We begin with the raw amino-acid sequence, 556 residues long: Arginine--tRNA ligase (556 aa).

The 'HIGH' region signature appears at 132 to 142 (ANPTGDLHLGH).

It belongs to the class-I aminoacyl-tRNA synthetase family. Monomer.

The protein resides in the cytoplasm. The enzyme catalyses tRNA(Arg) + L-arginine + ATP = L-arginyl-tRNA(Arg) + AMP + diphosphate. This is Arginine--tRNA ligase from Shouchella clausii (strain KSM-K16) (Alkalihalobacillus clausii).